The sequence spans 868 residues: Leucine--tRNA ligase (868 aa).

The 'HIGH' region motif lies at 42-52 (PYPSGKLHMGH). The 'KMSKS' region motif lies at 624-628 (TMSKS). Residue Lys-627 participates in ATP binding.

This sequence belongs to the class-I aminoacyl-tRNA synthetase family.

It localises to the cytoplasm. It catalyses the reaction tRNA(Leu) + L-leucine + ATP = L-leucyl-tRNA(Leu) + AMP + diphosphate. This is Leucine--tRNA ligase from Nitrosomonas eutropha (strain DSM 101675 / C91 / Nm57).